Reading from the N-terminus, the 759-residue chain is DNA topoisomerase 4 subunit A (759 aa).

One can recognise a Topo IIA-type catalytic domain in the interval 44–516 (LPDVRDGLKP…VFGEAPQVDA (473 aa)). The active-site O-(5'-phospho-DNA)-tyrosine intermediate is Tyr132.

It belongs to the type II topoisomerase GyrA/ParC subunit family. ParC type 1 subfamily. As to quaternary structure, heterotetramer composed of ParC and ParE.

The protein localises to the cell membrane. The enzyme catalyses ATP-dependent breakage, passage and rejoining of double-stranded DNA.. Topoisomerase IV is essential for chromosome segregation. It relaxes supercoiled DNA. Performs the decatenation events required during the replication of a circular DNA molecule. The sequence is that of DNA topoisomerase 4 subunit A from Caulobacter vibrioides (strain ATCC 19089 / CIP 103742 / CB 15) (Caulobacter crescentus).